The primary structure comprises 370 residues: Putative replication factor C small subunit L478 (370 aa).

41–48 (GPSGSGKK) contacts ATP. Residues 342 to 353 (RNKEPEKSEKTK) are compositionally biased toward basic and acidic residues. Residues 342–370 (RNKEPEKSEKTKSKTGKLSRTNSKKTIKN) form a disordered region. Residues 354-370 (SKTGKLSRTNSKKTIKN) show a composition bias toward basic residues.

This sequence belongs to the activator 1 small subunits family. RfcS subfamily.

Functionally, part of the RFC clamp loader complex which loads the PCNA sliding clamp onto DNA. The protein is Putative replication factor C small subunit L478 of Acanthamoeba polyphaga (Amoeba).